The chain runs to 362 residues: Phosphate acyltransferase (362 aa).

A disordered region spans residues 343–362 (TKKISTSTINPKTSETTKES). Residues 344–356 (KKISTSTINPKTS) are compositionally biased toward polar residues.

It belongs to the PlsX family. Homodimer. Probably interacts with PlsY.

Its subcellular location is the cytoplasm. The enzyme catalyses a fatty acyl-[ACP] + phosphate = an acyl phosphate + holo-[ACP]. The protein operates within lipid metabolism; phospholipid metabolism. Catalyzes the reversible formation of acyl-phosphate (acyl-PO(4)) from acyl-[acyl-carrier-protein] (acyl-ACP). This enzyme utilizes acyl-ACP as fatty acyl donor, but not acyl-CoA. This Aster yellows witches'-broom phytoplasma (strain AYWB) protein is Phosphate acyltransferase.